We begin with the raw amino-acid sequence, 257 residues long: ATP synthase delta chain, chloroplastic (257 aa).

Residues 1-70 (MAALQNPVAL…PRGGALGTRM (70 aa)) constitute a chloroplast transit peptide.

The protein belongs to the ATPase delta chain family. F-type ATPases have 2 components, CF(1) - the catalytic core - and CF(0) - the membrane proton channel. CF(1) has five subunits: alpha(3), beta(3), gamma(1), delta(1), epsilon(1). CF(0) has three main subunits: a, b and c.

It localises to the plastid. Its subcellular location is the chloroplast thylakoid membrane. Functionally, this protein seems to be part of the stalk that links CF(0) to CF(1). It either transmits conformational changes from CF(0) into CF(1) or is implicated in proton conduction. The chain is ATP synthase delta chain, chloroplastic (ATPD) from Spinacia oleracea (Spinach).